A 256-amino-acid polypeptide reads, in one-letter code: Floral homeotic protein APETALA 1 (256 aa).

The MADS-box domain maps to 1-61; that stretch reads MGRGRVQLKR…GKLFEYSTDS (61 aa). The K-box domain occupies 88–178; it reads NTNWSMEYNR…SKQIKEREKV (91 aa). The segment at 180–206 is disordered; sequence RAQQEQWDQQNHGQNMPPPPPPQEHQI.

Homodimer capable of binding to CArG-box sequences.

The protein localises to the nucleus. Transcription factor that promotes early floral meristem identity in synergy with LEAFY. Displays a redundant function with CAULIFLOWER in the up-regulation of LEAFY. Required subsequently for the transition of an inflorescence meristem into a floral meristem, and for the normal development of sepals and petals in flowers. Regulates positively B class homeotic proteins. The chain is Floral homeotic protein APETALA 1 (AP1) from Brassica rapa subsp. pekinensis (Chinese cabbage).